A 156-amino-acid polypeptide reads, in one-letter code: Beta-defensin 125 (156 aa).

A signal peptide spans 1–20 (MNILMLTFIICGLLTRVTKG). Intrachain disulfides connect cysteine 27–cysteine 55, cysteine 35–cysteine 49, and cysteine 39–cysteine 56. A propeptide spanning residues 68–156 (PAFPVIHLED…PPSQTALTHN (89 aa)) is cleaved from the precursor. Positions 108–156 (GETMTPETNTPETTMPPSEATTPETTMPPSETATSETMPPPSQTALTHN) are disordered. Residues 109–144 (ETMTPETNTPETTMPPSEATTPETTMPPSETATSET) are compositionally biased toward low complexity.

The protein belongs to the beta-defensin family.

The protein localises to the secreted. Has antibacterial activity. This chain is Beta-defensin 125 (DEFB125), found in Homo sapiens (Human).